The primary structure comprises 464 residues: MAHVRHFRTLVSGFYFWEAALLLSLVATKETNSARSRSAPMSPSDFLDKLMGRTSGYDARIRPNFKGPPVNVTCNIFINSFGSIAETTMDYRVNIFLRQKWNDPRLAYSEYPDDSLDLDPSMLDSIWKPDLFFANEKGANFHEVTTDNKLLRIFKNGNVLYSIRLTLTLSCPMDLKNFPMDVQTCIMQLESFGYTMNDLIFEWQDEAPVQVAEGLTLPQFLLKEEKDLRYCTKHYNTGKFTCIEVRFHLERQMGYYLIQMYIPSLLIVILSWVSFWINMDAAPARVALGITTVLTMTTQSSGSRASLPKVSYVKAIDIWMAVCLLFVFSALLEYAAVNFVSRQHKELLRFRRKRKNKTEAFALEKFYRFSDTDDEVRESRFSFTAYGMGPCLQAKDGVVPKGPNHAVQVMPKSPDEMRKVFIDRAKKIDTISRACFPLAFLIFNIFYWVIYKILRHEDIHQQQD.

Positions Met1–Ser33 are cleaved as a signal peptide. Residues Ala34–Tyr255 lie on the Extracellular side of the membrane. Asn71 carries N-linked (GlcNAc...) asparagine glycosylation. The cysteines at positions 171 and 185 are disulfide-linked. The Zn(2+) site is built by Glu225 and Asp227. Cys231 and Cys242 are disulfide-bonded. Tyr235 to Phe240 is a strychnine binding site. Residue His248 participates in Zn(2+) binding. A helical transmembrane segment spans residues Tyr256–Ile277. Residues Asn278–Ala282 lie on the Cytoplasmic side of the membrane. Residues Pro283–Ser303 traverse the membrane as a helical segment. Topologically, residues Arg304 to Lys314 are extracellular. The chain crosses the membrane as a helical span at residues Ala315–Ala335. At Ala336–Thr430 the chain is on the cytoplasmic side. Ser370 carries the phosphoserine modification. Position 379 is a phosphoserine; by PKA (Ser379). Residues Ile431 to Tyr451 traverse the membrane as a helical segment. The Extracellular portion of the chain corresponds to Lys452–Asp464.

The protein belongs to the ligand-gated ion channel (TC 1.A.9) family. Glycine receptor (TC 1.A.9.3) subfamily. GLRA3 sub-subfamily. Homopentamer (in vitro). Heteropentamer composed of GLRA3 and GLRB. Both homopentamers and heteropentamers form functional ion channels, but their characteristics are subtly different. In terms of processing, phosphorylated by PKA; this causes down-regulation of channel activity. Dephosphorylated in response to activation of HTR1A signaling; this increases channel activity. In terms of tissue distribution, detected in brainstem, also in neurons that control rhythmic breathing. Detected in superficial laminae of the dorsal horn of the thoracic spinal cord. Detected in dentate gyrus in hippocampus, especially in stratum granulare. Detected in the inner plexiform layer in the retina (at protein level). Detected in midbrain, thalamus, brain cortex, hippocampus, and at lower levels in cerebellum.

The protein localises to the postsynaptic cell membrane. Its subcellular location is the synapse. It is found in the perikaryon. It localises to the cell projection. The protein resides in the dendrite. The protein localises to the cell membrane. It carries out the reaction chloride(in) = chloride(out). Its activity is regulated as follows. Inhibited by prostaglandin E2, probably via PKA-mediated phosphorylation at Ser-379. Functionally, glycine receptors are ligand-gated chloride channels. Channel opening is triggered by extracellular glycine. Channel characteristics depend on the subunit composition; heteropentameric channels display faster channel closure. Plays an important role in the down-regulation of neuronal excitability. Contributes to the generation of inhibitory postsynaptic currents. Contributes to increased pain perception in response to increased prostaglandin E2 levels. Plays a role in the regulation of breathing rhythm, especially of the duration of the postinspiratory phase. Plays a role in cellular responses to ethanol. This chain is Glycine receptor subunit alpha-3 (Glra3), found in Mus musculus (Mouse).